We begin with the raw amino-acid sequence, 335 residues long: Mevalonate kinase (335 aa).

Proline 111–alanine 121 contributes to the ATP binding site. Aspartate 162 serves as the catalytic Proton acceptor.

It belongs to the GHMP kinase family. Mevalonate kinase subfamily. As to quaternary structure, homodimer. It depends on Mg(2+) as a cofactor.

The protein resides in the cytoplasm. It catalyses the reaction (R)-mevalonate + ATP = (R)-5-phosphomevalonate + ADP + H(+). The protein operates within isoprenoid biosynthesis; isopentenyl diphosphate biosynthesis via mevalonate pathway; isopentenyl diphosphate from (R)-mevalonate: step 1/3. Its function is as follows. Catalyzes the phosphorylation of (R)-mevalonate (MVA) to (R)-mevalonate 5-phosphate (MVAP). Functions in the mevalonate (MVA) pathway leading to isopentenyl diphosphate (IPP), a key precursor for the biosynthesis of isoprenoid compounds such as archaeal membrane lipids. The protein is Mevalonate kinase of Pyrococcus horikoshii (strain ATCC 700860 / DSM 12428 / JCM 9974 / NBRC 100139 / OT-3).